Reading from the N-terminus, the 231-residue chain is Probable transaldolase (231 aa).

K83 (schiff-base intermediate with substrate) is an active-site residue.

Belongs to the transaldolase family. Type 3B subfamily.

The protein localises to the cytoplasm. The enzyme catalyses D-sedoheptulose 7-phosphate + D-glyceraldehyde 3-phosphate = D-erythrose 4-phosphate + beta-D-fructose 6-phosphate. Its pathway is carbohydrate degradation; pentose phosphate pathway; D-glyceraldehyde 3-phosphate and beta-D-fructose 6-phosphate from D-ribose 5-phosphate and D-xylulose 5-phosphate (non-oxidative stage): step 2/3. In terms of biological role, transaldolase is important for the balance of metabolites in the pentose-phosphate pathway. The chain is Probable transaldolase from Rhodospirillum centenum (strain ATCC 51521 / SW).